The following is a 396-amino-acid chain: Phosphoglycerate kinase (396 aa).

Substrate-binding positions include 21–23 (DFN), Arg-36, 59–62 (HLGR), Arg-118, and Arg-151. ATP is bound by residues Lys-201, Gly-292, Glu-323, and 349 to 352 (GGDS).

It belongs to the phosphoglycerate kinase family. In terms of assembly, monomer.

The protein resides in the cytoplasm. It catalyses the reaction (2R)-3-phosphoglycerate + ATP = (2R)-3-phospho-glyceroyl phosphate + ADP. Its pathway is carbohydrate degradation; glycolysis; pyruvate from D-glyceraldehyde 3-phosphate: step 2/5. In Leptospira biflexa serovar Patoc (strain Patoc 1 / Ames), this protein is Phosphoglycerate kinase.